A 494-amino-acid polypeptide reads, in one-letter code: Folate-biopterin transporter (494 aa).

The next 12 membrane-spanning stretches (helical) occupy residues 31–51, 64–84, 104–124, 133–153, 170–190, 197–217, 246–266, 284–303, 310–330, 346–366, 375–395, and 415–435; these read APSW…VLGL, LGLS…PWIL, SYLW…AAWV, VLLF…SLVV, LTWG…GALL, TVFA…FLIS, ILLP…ESAF, VRLV…QRFL, VIMG…LILI, LGDS…VLVL, IEAT…VLSF, and LALL…FLGL. The interval 441 to 461 is disordered; sequence PQVKDKTEKEDNPDDPGDRLV.

This sequence belongs to the major facilitator superfamily. Folate-biopterin transporter (TC 2.A.71) family.

The protein resides in the cell membrane. Functionally, mediates folate monoglutamate transport involved in tetrahydrofolate biosynthesis. It also mediates transport of antifolates, such as methotrexate and aminopterin. In Synechocystis sp. (strain ATCC 27184 / PCC 6803 / Kazusa), this protein is Folate-biopterin transporter.